The chain runs to 407 residues: 12S rRNA N(4)-cytidine methyltransferase METTL15 (407 aa).

S-adenosyl-L-methionine contacts are provided by residues 100-102 (GGH), Asp-119, Phe-146, Asp-169, and Gln-176. Ser-358 bears the Phosphoserine mark.

It belongs to the methyltransferase superfamily. RsmH family.

Its subcellular location is the mitochondrion matrix. The catalysed reaction is cytidine(839) in 12S rRNA + S-adenosyl-L-methionine = N(4)-methylcytidine(839) in 12S rRNA + S-adenosyl-L-homocysteine + H(+). In terms of biological role, N4-methylcytidine (m4C) methyltransferase responsible for the methylation of position C839 in mitochondrial 12S rRNA. Involved in the stabilization of 12S rRNA folding, therefore facilitating the assembly of the mitochondrial small ribosomal subunits. The sequence is that of 12S rRNA N(4)-cytidine methyltransferase METTL15 (METTL15) from Pongo abelii (Sumatran orangutan).